The following is a 207-amino-acid chain: D-aminoacyl-tRNA deacylase 1 (207 aa).

The short motif at 139 to 140 (GP) is the Gly-cisPro motif, important for rejection of L-amino acids element. Positions 142 to 207 (TIQLESPPAP…EGDVSSEREP (66 aa)) are disordered. 2 stretches are compositionally biased toward basic and acidic residues: residues 156 to 167 (LLSKQEKQQQRK) and 178 to 189 (SSREKAAQRSKV).

Belongs to the DTD family. In terms of assembly, homodimer.

It is found in the cytoplasm. It catalyses the reaction a D-aminoacyl-tRNA + H2O = a tRNA + a D-alpha-amino acid + H(+). The enzyme catalyses glycyl-tRNA(Ala) + H2O = tRNA(Ala) + glycine + H(+). D-aminoacyl-tRNA deacylase, with no observable activity on tRNAs charged with their cognate L-amino acid. Hydrolyzes correctly charged, achiral, glycyl-tRNA(Gly). Deacylates mischarged D.melanogaster and E.coli glycyl-tRNA(Ala), protecting cells against glycine mischarging by AlaRS. Acts via tRNA-based rather than protein-based catalysis; rejects L-amino acids rather than detecting D-amino acids in the active site. By recycling D-aminoacyl-tRNA to D-amino acids and free tRNA molecules, this enzyme counteracts the toxicity associated with the formation of D-aminoacyl-tRNA entities in vivo and helps enforce protein L-homochirality. In Danio rerio (Zebrafish), this protein is D-aminoacyl-tRNA deacylase 1.